A 185-amino-acid polypeptide reads, in one-letter code: Large ribosomal subunit protein uL5 (185 aa).

Belongs to the universal ribosomal protein uL5 family. In terms of assembly, part of the 50S ribosomal subunit; part of the 5S rRNA/L5/L18/L25 subcomplex. Contacts the 5S rRNA and the P site tRNA. Forms a bridge to the 30S subunit in the 70S ribosome.

Its function is as follows. This is one of the proteins that bind and probably mediate the attachment of the 5S RNA into the large ribosomal subunit, where it forms part of the central protuberance. In the 70S ribosome it contacts protein S13 of the 30S subunit (bridge B1b), connecting the 2 subunits; this bridge is implicated in subunit movement. Contacts the P site tRNA; the 5S rRNA and some of its associated proteins might help stabilize positioning of ribosome-bound tRNAs. The chain is Large ribosomal subunit protein uL5 from Rhizobium johnstonii (strain DSM 114642 / LMG 32736 / 3841) (Rhizobium leguminosarum bv. viciae).